The following is a 401-amino-acid chain: Imidazolonepropionase (401 aa).

Residues His66 and His68 each coordinate Fe(3+). Residues His66 and His68 each contribute to the Zn(2+) site. Positions 75, 138, and 171 each coordinate 4-imidazolone-5-propanoate. Residue Tyr138 participates in N-formimidoyl-L-glutamate binding. His236 is a binding site for Fe(3+). His236 lines the Zn(2+) pocket. Gln239 lines the 4-imidazolone-5-propanoate pocket. Asp311 contributes to the Fe(3+) binding site. Asp311 lines the Zn(2+) pocket. N-formimidoyl-L-glutamate is bound by residues Asn313 and Gly315. Thr316 serves as a coordination point for 4-imidazolone-5-propanoate.

The protein belongs to the metallo-dependent hydrolases superfamily. HutI family. Requires Zn(2+) as cofactor. Fe(3+) serves as cofactor.

It is found in the cytoplasm. The catalysed reaction is 4-imidazolone-5-propanoate + H2O = N-formimidoyl-L-glutamate. Its pathway is amino-acid degradation; L-histidine degradation into L-glutamate; N-formimidoyl-L-glutamate from L-histidine: step 3/3. Functionally, catalyzes the hydrolytic cleavage of the carbon-nitrogen bond in imidazolone-5-propanoate to yield N-formimidoyl-L-glutamate. It is the third step in the universal histidine degradation pathway. The sequence is that of Imidazolonepropionase from Pseudomonas fluorescens (strain ATCC BAA-477 / NRRL B-23932 / Pf-5).